The chain runs to 134 residues: Prefoldin subunit 4 (134 aa).

N-acetylalanine is present on Ala2. At Ser125 the chain carries Phosphoserine.

Belongs to the prefoldin subunit beta family. As to quaternary structure, heterohexamer of two PFD-alpha type and four PFD-beta type subunits. Interacts with URI1; the interaction is phosphorylation-dependent and occurs in a growth-dependent manner.

The protein localises to the nucleus. Its subcellular location is the cytoplasm. It is found in the mitochondrion. Functionally, binds specifically to cytosolic chaperonin (c-CPN) and transfers target proteins to it. Binds to nascent polypeptide chain and promotes folding in an environment in which there are many competing pathways for nonnative proteins. The sequence is that of Prefoldin subunit 4 (PFDN4) from Homo sapiens (Human).